Consider the following 141-residue polypeptide: Hemoglobin subunit alpha (141 aa).

Residues 1–141 form the Globin domain; the sequence is VLSPDDKKHV…VSTVLTSKYR (141 aa). At Ser3 the chain carries Phosphoserine. Lys7 and Lys11 each carry N6-succinyllysine. Lys16 is subject to N6-acetyllysine; alternate. Lys16 carries the N6-succinyllysine; alternate modification. Position 24 is a phosphotyrosine (Tyr24). At Ser35 the chain carries Phosphoserine. N6-succinyllysine is present on Lys40. Ser49 carries the post-translational modification Phosphoserine. His58 serves as a coordination point for O2. His87 contacts heme b. At Ser102 the chain carries Phosphoserine. Thr108 is modified (phosphothreonine). Phosphoserine occurs at positions 124 and 131. Phosphothreonine occurs at positions 134 and 137. Ser138 is subject to Phosphoserine.

The protein belongs to the globin family. Heterotetramer of two alpha chains and two beta chains. In terms of tissue distribution, red blood cells.

Its function is as follows. Involved in oxygen transport from the lung to the various peripheral tissues. Functionally, hemopressin acts as an antagonist peptide of the cannabinoid receptor CNR1. Hemopressin-binding efficiently blocks cannabinoid receptor CNR1 and subsequent signaling. This chain is Hemoglobin subunit alpha (HBA), found in Cercocebus atys (Sooty mangabey).